The following is a 102-amino-acid chain: Ferredoxin-thioredoxin reductase, catalytic chain (102 aa).

Cys53 contributes to the [4Fe-4S] cluster binding site. Residue Cys55 is the Nucleophile of the active site. An intrachain disulfide couples Cys55 to Cys85. [4Fe-4S] cluster is bound by residues Cys72, Cys74, and Cys83.

It belongs to the ferredoxin thioredoxin reductase beta subunit family. As to quaternary structure, heterodimer of subunit A (variable subunit) and subunit B (catalytic subunit). Heterodimeric FTR forms a complex with ferredoxin and thioredoxin. It depends on [4Fe-4S] cluster as a cofactor.

The protein localises to the plastid. It is found in the chloroplast. It carries out the reaction [thioredoxin]-disulfide + 2 reduced [2Fe-2S]-[ferredoxin] + 2 H(+) = [thioredoxin]-dithiol + 2 oxidized [2Fe-2S]-[ferredoxin]. In terms of biological role, catalytic subunit of the ferredoxin-thioredoxin reductase (FTR), which catalyzes the two-electron reduction of thioredoxins by the electrons provided by reduced ferredoxin. The chain is Ferredoxin-thioredoxin reductase, catalytic chain (ftrB) from Guillardia theta (Cryptophyte).